The chain runs to 319 residues: Olfactory receptor 8U3 (319 aa).

Topologically, residues 1 to 25 (MAEVNISYVSEFILKGITDRPELQA) are extracellular. N-linked (GlcNAc...) asparagine glycosylation occurs at Asn-5. Residues 26 to 46 (PCFVMFLTIYLVTVLGNLGLI) traverse the membrane as a helical segment. At 47–54 (VIIRVDSR) the chain is on the cytoplasmic side. A helical transmembrane segment spans residues 55–75 (LHTPMYFFLSHLAFVDLCYSS). Residues 76-99 (AITPKMMVNFVVERNTIPFHACAT) are Extracellular-facing. Cys-97 and Cys-189 form a disulfide bridge. The helical transmembrane segment at 100-120 (QLGCFLTFMITECFLLASMAY) threads the bilayer. Residues 121-133 (DRYVAICSPLHYS) are Cytoplasmic-facing. A helical membrane pass occupies residues 134–154 (TLMSKRVCIQLVAVPYVYSFL). Topologically, residues 155–196 (VALFHTIITFRLTYCGPNVINHFYCDDLPLLALSCSDTHMKE) are extracellular. Residues 197-217 (ILIFAFAGFDMICSSSIVLTS) form a helical membrane-spanning segment. The Cytoplasmic portion of the chain corresponds to 218–237 (YLFIIAAILRIRSTQGRRKA). A helical membrane pass occupies residues 238–258 (ISTCGSHMVAVTIFYGTLIFM). Topologically, residues 259–271 (YLQPKSNHSLDTD) are extracellular. Asn-265 is a glycosylation site (N-linked (GlcNAc...) asparagine). Residues 272 to 292 (KMASVFYTVVIPMLNPLIYSL) form a helical membrane-spanning segment. At 293–319 (RNKEVKDASKKALDKGYETLKILRLSK) the chain is on the cytoplasmic side.

Belongs to the G-protein coupled receptor 1 family.

The protein resides in the cell membrane. Functionally, potential odorant receptor. In Mus musculus (Mouse), this protein is Olfactory receptor 8U3.